We begin with the raw amino-acid sequence, 145 residues long: Large ribosomal subunit protein uL13 (145 aa).

It belongs to the universal ribosomal protein uL13 family. As to quaternary structure, part of the 50S ribosomal subunit.

Its function is as follows. This protein is one of the early assembly proteins of the 50S ribosomal subunit, although it is not seen to bind rRNA by itself. It is important during the early stages of 50S assembly. The protein is Large ribosomal subunit protein uL13 of Exiguobacterium sibiricum (strain DSM 17290 / CCUG 55495 / CIP 109462 / JCM 13490 / 255-15).